The sequence spans 530 residues: Autoinducer-2 kinase (530 aa).

It belongs to the FGGY kinase family.

The protein localises to the cytoplasm. It catalyses the reaction (S)-4,5-dihydroxypentane-2,3-dione + ATP = (2S)-2-hydroxy-3,4-dioxopentyl phosphate + ADP + H(+). Catalyzes the phosphorylation of autoinducer-2 (AI-2) to phospho-AI-2, which subsequently inactivates the transcriptional regulator LsrR and leads to the transcription of the lsr operon. Phosphorylates the ring-open form of (S)-4,5-dihydroxypentane-2,3-dione (DPD), which is the precursor to all AI-2 signaling molecules, at the C5 position. The sequence is that of Autoinducer-2 kinase from Photorhabdus laumondii subsp. laumondii (strain DSM 15139 / CIP 105565 / TT01) (Photorhabdus luminescens subsp. laumondii).